The chain runs to 476 residues: E1B 55 kDa protein (476 aa).

2 disordered regions span residues 1–20 and 42–95; these read MERPNSSVAGLYSGLHGNGS and FGSS…KMEN. 2 positions are modified to phosphoserine: Ser472 and Ser473.

The protein belongs to the adenoviridae E1B 55 kDa protein family. In terms of assembly, interacts with host PML-4 and PML-5; this interaction promotes efficient subnuclear targeting of E1B-55K to PML nuclear bodies. Interacts with E4-ORF3 protein. Interacts with E4-ORF6 protein.

It is found in the host nucleus. The protein localises to the host cytoplasm. Plays a major role to prevent cellular inhibition of viral genome replication. Assembles an SCF-like E3 ubiquitin ligase complex based on the cellular proteins ELOB, ELOC, CUL5 and RBX1, in cooperation with viral E4orf6. This viral RING-type ligase ubiquitinates cellular substrates and targets them to proteasomal degradation: TP53/p53, LIG4, MRE11-RAD50-NBS1 (MRN) complex, ITGA3, DAXX and BLM. E1B-55K probably acts as the substrate-specific adapter of the SCF-like E3 ubiquitin ligase complex. Degradation of host TP53/p53 activity is essential for preventing E1A-induced TP53 accumulation that would otherwise lead to cell apoptosis and growth arrest. E1B-55K also inactivates TP53 transcription-factor activity by binding its transactivation domain. E1B-55K also functions as a SUMO1 E3 ligase for TP53 which causes the latter to be sequestered in promyelocytic leukemia (PML) nuclear bodies thereby contributing to maximal inhibition of TP53 function. The chain is E1B 55 kDa protein from Human adenovirus F serotype 40 (HAdV-40).